We begin with the raw amino-acid sequence, 291 residues long: DNA N6-methyl adenine demethylase (291 aa).

Residues 85–256 (GLTLIHNFLS…RGRRIALTMR (172 aa)) enclose the Fe2OG dioxygenase domain. Position 171–173 (171–173 (LEY)) interacts with 2-oxoglutarate. Fe cation contacts are provided by His184, Asp186, and His239.

It belongs to the alkB family. As to quaternary structure, interacts with top-2; the interaction is required for localization of top-2 to DNA. Also interacts with mtss-1, his-24, ule-3, C18B2.3, pgl-1, ceh-93, mcm-4 and F37C4.5. Fe(2+) is required as a cofactor.

The protein resides in the nucleus. The enzyme catalyses an N(6)-methyl-2'-deoxyadenosine in DNA + 2-oxoglutarate + O2 = a 2'-deoxyadenosine in DNA + formaldehyde + succinate + CO2. Dioxygenase that specifically demethylates DNA methylated on the 6th position of adenine (N(6)-methyladenosine) DNA. N(6)-methyladenosine (m6A) DNA is involved in epigenetic transgenerational inheritance. Plays an essential role in DNA replication and repair in the germline during meiosis. Binds to components of the DNA replication machinery such as top-2, and directs their localization to DNA to control DNA replication. This is DNA N6-methyl adenine demethylase from Caenorhabditis elegans.